A 528-amino-acid chain; its full sequence is Drimenol cyclase drtB (528 aa).

This sequence belongs to the HAD-like hydrolase superfamily.

The catalysed reaction is (2E,6E)-farnesyl diphosphate + H2O = (5S,9S,10S)-drim-7-en-11-ol + diphosphate. The protein operates within secondary metabolite biosynthesis; terpenoid biosynthesis. In terms of biological role, drimenol cyclase; part of the gene cluster that mediates the biosynthesis of various drimane-type sesquiterpene esters, compounds that exhibit diverse biological activities and are widely present in eukaryotes. The pathway begins with the synthesis of the backbone drimenol by the terpene cyclase drtB using farnesyl pyrophosphate (FPP) as substrate. The cytochrome P450 monooxygenase drtD is then responsible for the hydroxylations at C-6, C-9 and C-12, as well as the oxidation of hydroxyl groups at C-6 and C-11 to a ketone and an aldehyde, respectively. Then, the biosynthesis can go in two directions, either the hydroxylated drimenol is further hydroxylated at C-2 and C-3 by an enzyme(s) not associated with the drt cluster, or the FAD-binding oxidoreductase drtC further oxidizes C-11 or C-12 to form the butyrolactone ring. DrtB, drtD and drtC are solely responsible for the formation of the different drimane structures observed during drimane sesquiterpenes biosynthesis. The polyketide synthase drtA synthesizes different lengths (C6 and C8) of PKS chains, which are then oxidized to varying degrees by the short-chain dehydrogenase drtF. Finally, these PKS chains are transferred onto drimane sesquiterpenes by the acyltransferase drtE, forming the sesquiterpene esters. In addition to the different fatty acyl-CoA chains produced by drtA, drtE is also able to use cinnamoyl-CoA as a substrate. This is Drimenol cyclase drtB from Aspergillus calidoustus.